Reading from the N-terminus, the 307-residue chain is Elongation factor Ts (307 aa).

The segment at 80-83 is involved in Mg(2+) ion dislocation from EF-Tu; the sequence is TDFV.

Belongs to the EF-Ts family.

The protein localises to the cytoplasm. Functionally, associates with the EF-Tu.GDP complex and induces the exchange of GDP to GTP. It remains bound to the aminoacyl-tRNA.EF-Tu.GTP complex up to the GTP hydrolysis stage on the ribosome. The protein is Elongation factor Ts of Clostridium botulinum (strain 657 / Type Ba4).